The chain runs to 229 residues: MAIGKRLKKAREGIDRTKLYPLDEAVKMVKERAVSKFDETIEVALNLGVDPRHADQMVRGVVMLPNGTGRTVRVGVFARGAKADEAKAAGADVVGAEDLVEQVQAGNINFDRCIATPDMMPLVGRLGKVLGPRGMMPNPKIGTVTMDVAGAVKGAKGGSVEFRVEKAGIVQAGVGKASFSEEKLVENIKALADAVTKAKPTGAKGTYIQRVAVSSSMGPGVKVEPGSVH.

The protein belongs to the universal ribosomal protein uL1 family. In terms of assembly, part of the 50S ribosomal subunit.

Binds directly to 23S rRNA. The L1 stalk is quite mobile in the ribosome, and is involved in E site tRNA release. In terms of biological role, protein L1 is also a translational repressor protein, it controls the translation of the L11 operon by binding to its mRNA. In Rhodopseudomonas palustris (strain HaA2), this protein is Large ribosomal subunit protein uL1.